The following is a 992-amino-acid chain: UPF0182 protein RHA1_ro06389 (992 aa).

7 helical membrane passes run 18–38 (VLLV…RLIS), 63–83 (LLLF…ALLL), 114–134 (LFGL…AQSS), 174–194 (WLFV…YIFG), 211–231 (VQLA…YWFD), 260–280 (KLIL…AIFL), and 288–308 (MATA…PLVV). The interval 904 to 948 (TGSVATAPSAEEGTPPETGTTPPVDQGAAPAPTAPATPPSGTDVS) is disordered. Residues 908 to 934 (ATAPSAEEGTPPETGTTPPVDQGAAPA) show a composition bias toward low complexity.

The protein belongs to the UPF0182 family.

It localises to the cell membrane. The chain is UPF0182 protein RHA1_ro06389 from Rhodococcus jostii (strain RHA1).